A 606-amino-acid polypeptide reads, in one-letter code: V-type proton ATPase catalytic subunit A (606 aa).

An ATP-binding site is contributed by 239–246; it reads GAFGCGKT.

This sequence belongs to the ATPase alpha/beta chains family. V-ATPase is a heteromultimeric enzyme made up of two complexes: the ATP-hydrolytic V1 complex and the proton translocation V0 complex. The V1 complex consists of three catalytic AB heterodimers that form a heterohexamer, three peripheral stalks each consisting of EG heterodimers, one central rotor including subunits D and F, and the regulatory subunits C and H. The proton translocation complex V0 consists of the proton transport subunit a, a ring of proteolipid subunits c9c'', rotary subunit d, subunits e and f, and the accessory subunits vah-19/Ac45 and vah-20/PRR.

It catalyses the reaction ATP + H2O + 4 H(+)(in) = ADP + phosphate + 5 H(+)(out). Its function is as follows. Catalytic subunit of the V1 complex of vacuolar(H+)-ATPase (V-ATPase), a multisubunit enzyme composed of a peripheral complex (V1) that hydrolyzes ATP and a membrane integral complex (V0) that translocates protons. V-ATPase is responsible for acidifying and maintaining the pH of intracellular compartments and in some cell types, is targeted to the plasma membrane, where it is responsible for acidifying the extracellular environment. Required along with other vacuolar ATPase components for the removal of protein aggregates which form in immature oocytes in the distal gonad. This removal occurs as the oocytes mature and move to the proximal gonad, is triggered by the introduction of sperm through mating and occurs before fertilization. The introduction of sperm triggers V-ATPase accumulation in proximal oocytes and induces lysosomal acidification which leads to engulfing of protein aggregates by lysosomes and subsequent clearance of the aggregates. Lysosomal acidification also leads to changes in mitochondrial morphology and function. Mitochondria in distal immature oocytes are fragmented, produce high levels of reactive oxygen species (ROS) and have high membrane potential, indicative of metabolic inactivity. In contrast, mitochondria in proximal mature oocytes are tubular with lower ROS levels and membrane potential, indicative of an active metabolic state required for aggregate mobilization before clearance. Involved in receptor-mediated endocytosis. The sequence is that of V-type proton ATPase catalytic subunit A from Caenorhabditis briggsae.